The following is a 334-amino-acid chain: BTB and MATH domain-containing protein 39 (334 aa).

The MATH domain maps to 14–141; the sequence is IVTLVFNIYN…EGRFQIEFDL (128 aa). The BTB domain occupies 164–229; it reads ADGELITDGK…LQLDSFEVSV (66 aa).

This is BTB and MATH domain-containing protein 39 (bath-39) from Caenorhabditis elegans.